The primary structure comprises 199 residues: DnaJ homolog subfamily C member 5B (199 aa).

2 positions are modified to phosphoserine: Ser-14 and Ser-16. One can recognise a J domain in the interval 19 to 84 (SLYEILGLHK…SKRNIYDKYG (66 aa)).

In terms of assembly, interacts with the chaperone complex consisting of HSC70 and SGTA. Post-translationally, palmitoylated.

It localises to the membrane. In Mus musculus (Mouse), this protein is DnaJ homolog subfamily C member 5B (Dnajc5b).